Here is a 508-residue protein sequence, read N- to C-terminus: Splicing regulatory glutamine/lysine-rich protein 1 (508 aa).

Residues 66-142 enclose the RRM domain; the sequence is RTVYVGNLNS…RPLKINHSNN (77 aa). Ser-171 and Ser-184 each carry phosphoserine. Positions 173–508 are disordered; that stretch reads ISAAIEPESG…ENLSTKTEAV (336 aa). Residues 180 to 189 show a composition bias toward basic and acidic residues; it reads ESGKSNERKG. Positions 190-259 are enriched in basic residues; the sequence is GRSRSHTRSK…KSRSRSHSRD (70 aa). The span at 260 to 355 shows a compositional bias: basic and acidic residues; the sequence is KRKDTREKIK…DRSKEIDEKR (96 aa). The residue at position 363 (Thr-363) is a Phosphothreonine. The segment covering 372–388 has biased composition (basic residues); sequence RRSRSSSRERRRRRSRS. Residues 419–488 are compositionally biased toward basic and acidic residues; it reads REKERDHISE…DAPRTEENKI (70 aa). The segment covering 489-508 has biased composition (polar residues); it reads QHNGNCQLNEENLSTKTEAV. Lys-504 is covalently cross-linked (Glycyl lysine isopeptide (Lys-Gly) (interchain with G-Cter in SUMO2)).

Belongs to the splicing factor SR family. In terms of assembly, homodimer. Binds SFRS1, SFRS2, SFRS3 and SFRS6. Interacts with the spliceosome. Interacts with SREK1IP1.

It is found in the nucleus. Its function is as follows. Participates in the regulation of alternative splicing by modulating the activity of other splice facors. Inhibits the splicing activity of SFRS1, SFRS2 and SFRS6. Augments the splicing activity of SFRS3. The sequence is that of Splicing regulatory glutamine/lysine-rich protein 1 (SREK1) from Homo sapiens (Human).